The primary structure comprises 902 residues: Glutamate receptor 4 (902 aa).

The first 20 residues, 1-20 (MRIICRQIVLLFSGFWGLAM), serve as a signal peptide directing secretion. Residues 22 to 544 (AFPSSVQIGG…GVFSFLDPLA (523 aa)) lie on the Extracellular side of the membrane. 6 N-linked (GlcNAc...) asparagine glycosylation sites follow: Asn-52, Asn-56, Asn-258, Asn-371, Asn-407, and Asn-414. Cys-84 and Cys-331 are disulfide-bonded. L-glutamate is bound by residues Pro-500, Thr-502, and Arg-507. The helical transmembrane segment at 545 to 565 (YEIWMCIVFAYIGVSVVLFLV) threads the bilayer. Topologically, residues 566 to 592 (SRFSPYEWHTEEPEDGKEGPSDQPPNE) are cytoplasmic. Residues 593-608 (FGIFNSLWFSLGAFMQ) constitute an intramembrane region (helical; Pore-forming). Residues 609-611 (QGC) lie within the membrane without spanning it. Cys-611 is lipidated: S-palmitoyl cysteine. Residues 612 to 617 (DISPRS) lie on the Cytoplasmic side of the membrane. The helical transmembrane segment at 618 to 638 (LSGRIVGGVWWFFTLIIISSY) threads the bilayer. Residues 639–813 (TANLAAFLTV…DKTSALSLSN (175 aa)) lie on the Extracellular side of the membrane. Residues Ser-676, Thr-677, and Glu-727 each contribute to the L-glutamate site. Cys-740 and Cys-795 form a disulfide bridge. A helical membrane pass occupies residues 814–834 (VAGVFYILVGGLGLAMLVALI). Residues 835 to 902 (EFCYKSRAEA…GLAVIASDLP (68 aa)) lie on the Cytoplasmic side of the membrane. Cys-837 carries S-palmitoyl cysteine lipidation. At Ser-862 the chain carries Phosphoserine; by PKC/PRKCG.

Belongs to the glutamate-gated ion channel (TC 1.A.10.1) family. GRIA4 subfamily. As to quaternary structure, homotetramer or heterotetramer of pore-forming glutamate receptor subunits. Tetramers may be formed by the dimerization of dimers. Interacts with EPB41L1 via its C-terminus. Isoform 3 interacts with PICK1. Found in a complex with GRIA1, GRIA2, GRIA3, CNIH2, CNIH3, CACNG2, CACNG3, CACNG4, CACNG5, CACNG7 and CACNG8. Interacts with CACNG5 and PRKCG. Found in a complex with GRIA1, GRIA2, GRIA3, DLG4, CACNG8 and CNIH2. In terms of processing, palmitoylated. Depalmitoylated upon L-glutamate stimulation. ZDHHC3/GODZ specifically palmitoylates Cys-611, which leads to Golgi retention and decreased cell surface expression. In contrast, Cys-837 palmitoylation does not affect cell surface expression but regulates stimulation-dependent endocytosis. Post-translationally, phosphorylated at Ser-862 by PRKCG; phosphorylation increases plasma membrane-associated GRI4 expression. In terms of tissue distribution, detected in cerebellum.

It is found in the cell membrane. The protein resides in the postsynaptic cell membrane. It localises to the cell projection. The protein localises to the dendrite. The catalysed reaction is Ca(2+)(in) = Ca(2+)(out). The enzyme catalyses Na(+)(in) = Na(+)(out). It carries out the reaction Mg(2+)(in) = Mg(2+)(out). Its function is as follows. Ionotropic glutamate receptor that functions as a ligand-gated cation channel, gated by L-glutamate and glutamatergic agonists such as alpha-amino-3-hydroxy-5-methyl-4-isoxazolepropionic acid (AMPA), quisqualic acid, and kainic acid. L-glutamate acts as an excitatory neurotransmitter at many synapses in the central nervous system and plays an important role in fast excitatory synaptic transmission. Binding of the excitatory neurotransmitter L-glutamate induces a conformation change, leading to the opening of the cation channel, and thereby converts the chemical signal to an electrical impulse upon entry of monovalent and divalent cations such as sodium and calcium. The receptor then desensitizes rapidly and enters a transient inactive state, characterized by the presence of bound agonist. In the presence of CACNG8, shows resensitization which is characterized by a delayed accumulation of current flux upon continued application of L-glutamate. The sequence is that of Glutamate receptor 4 from Rattus norvegicus (Rat).